Here is a 312-residue protein sequence, read N- to C-terminus: Ornithine carbamoyltransferase (312 aa).

Carbamoyl phosphate is bound by residues 57 to 60, Gln-84, Arg-108, and 135 to 138; these read STRT and HPCQ. Residues Asn-166, Asp-226, and 230–231 contribute to the L-ornithine site; that span reads SM. Residues 265-266 and Arg-293 contribute to the carbamoyl phosphate site; that span reads CL.

This sequence belongs to the aspartate/ornithine carbamoyltransferase superfamily. OTCase family.

It localises to the cytoplasm. It catalyses the reaction carbamoyl phosphate + L-ornithine = L-citrulline + phosphate + H(+). Its pathway is amino-acid biosynthesis; L-arginine biosynthesis; L-arginine from L-ornithine and carbamoyl phosphate: step 1/3. Functionally, reversibly catalyzes the transfer of the carbamoyl group from carbamoyl phosphate (CP) to the N(epsilon) atom of ornithine (ORN) to produce L-citrulline. This is Ornithine carbamoyltransferase from Brucella suis biovar 1 (strain 1330).